The sequence spans 107 residues: Protein phosphatase 1 regulatory subunit INH3 (107 aa).

The span at 1 to 14 shows a compositional bias: low complexity; sequence MSTATRPSSSATTS. Disordered stretches follow at residues 1–40 and 69–107; these read MSTATRPSSSATTSVILENPVSQSQPTERLVLRLNRKKKK and PFDEDDSEEEDDNNHHCDHNHEHSESGEASSSNDSKAVD. Acidic residues predominate over residues 71–80; that stretch reads DEDDSEEEDD. Positions 81–94 are enriched in basic and acidic residues; it reads NNHHCDHNHEHSES. The span at 95–107 shows a compositional bias: low complexity; sequence GEASSSNDSKAVD.

As to quaternary structure, interacts with protein phosphatase 1. In terms of tissue distribution, expressed in roots, cotyledons, leaves, flowers and embryos.

Inhibitor of protein-phosphatase 1 (PP1). Binds to and inhibits PP1 activity. Required for early embryogenesis progression. The chain is Protein phosphatase 1 regulatory subunit INH3 from Arabidopsis thaliana (Mouse-ear cress).